Consider the following 59-residue polypeptide: Large ribosomal subunit protein bL32 (59 aa).

The interval Met-1–Glu-59 is disordered. The segment covering Arg-7 to Arg-16 has biased composition (basic residues). Low complexity predominate over residues Ala-21–Thr-33.

This sequence belongs to the bacterial ribosomal protein bL32 family.

The chain is Large ribosomal subunit protein bL32 from Marinobacter nauticus (strain ATCC 700491 / DSM 11845 / VT8) (Marinobacter aquaeolei).